We begin with the raw amino-acid sequence, 252 residues long: Trans-aconitate 2-methyltransferase (252 aa).

This sequence belongs to the methyltransferase superfamily. Tam family.

It is found in the cytoplasm. The enzyme catalyses trans-aconitate + S-adenosyl-L-methionine = (E)-3-(methoxycarbonyl)pent-2-enedioate + S-adenosyl-L-homocysteine. Catalyzes the S-adenosylmethionine monomethyl esterification of trans-aconitate. The polypeptide is Trans-aconitate 2-methyltransferase (Escherichia coli O6:H1 (strain CFT073 / ATCC 700928 / UPEC)).